The chain runs to 398 residues: Mu-type opioid receptor (398 aa).

The Extracellular portion of the chain corresponds to 1–66 (MDSSAGPGNI…CPQTGSPSMV (66 aa)). 4 N-linked (GlcNAc...) asparagine glycosylation sites follow: N9, N31, N38, and N46. Residues 67 to 91 (TAITIMALYSIVCVVGLFGNFLVMY) form a helical membrane-spanning segment. Over 92-104 (VIVRYTKMKTATN) the chain is Cytoplasmic. A helical transmembrane segment spans residues 105–129 (IYIFNLALADALATSTLPFQSVNYL). Topologically, residues 130-140 (MGTWPFGNILC) are extracellular. A disulfide bridge connects residues C140 and C217. Residues 141-163 (KIVISIDYYNMFTSIFTLCTMSV) form a helical membrane-spanning segment. Over 164–183 (DRYIAVCHPVKALDFRTPRN) the chain is Cytoplasmic. Y166 carries the phosphotyrosine modification. The helical transmembrane segment at 184-205 (AKIVNVCNWILSSAIGLPVMFM) threads the bilayer. The Extracellular segment spans residues 206–228 (ATTKYRQGSIDCTLTFSHPTWYW). The chain crosses the membrane as a helical span at residues 229 to 253 (ENLLKICVFIFAFIMPVLIITVCYG). Topologically, residues 254–277 (LMILRLKSVRMLSGSKEKDRNLRR) are cytoplasmic. The chain crosses the membrane as a helical span at residues 278 to 304 (ITRMVLVVVAVFIVCWTPIHIYVIIKA). Residues 305-312 (LITIPETT) lie on the Extracellular side of the membrane. The helical transmembrane segment at 313–336 (FQTVSWHFCIALGYTNSCLNPVLY) threads the bilayer. Residues 332–336 (NPVLY) carry the NPxxY; plays a role in stabilizing the activated conformation of the receptor motif. Residues 337-398 (AFLDENFKRC…NLEAETAPLP (62 aa)) are Cytoplasmic-facing. A lipid anchor (S-palmitoyl cysteine) is attached at C351. The segment at 362–383 (NSARIRQNTREHPSTANTVDRT) is disordered. Phosphoserine is present on S363. T370 carries the post-translational modification Phosphothreonine. The residue at position 375 (S375) is a Phosphoserine. T394 carries the phosphothreonine modification.

This sequence belongs to the G-protein coupled receptor 1 family. Forms homooligomers and heterooligomers with other GPCRs, such as OPRD1, OPRK1, OPRL1, NPFFR2, ADRA2A, SSTR2, CNR1 and CCR5 (probably in dimeric forms). Interacts with heterotrimeric G proteins; interaction with a heterotrimeric complex containing GNAI1, GNB1 and GNG2 stabilizes the active conformation of the receptor and increases its affinity for endomorphin-2, the synthetic opioid peptide DAMGO and for morphinan agonists. Interacts with PPL; the interaction disrupts agonist-mediated G-protein activation. Interacts (via C-terminus) with DNAJB4 (via C-terminus). Interacts with calmodulin; the interaction inhibits the constitutive activity of OPRM1; it abolishes basal and attenuates agonist-stimulated G-protein coupling. Interacts with FLNA, PLD2, RANBP9 and WLS and GPM6A. Interacts with RTP4. Interacts with SYP and GNAS. Interacts with RGS9, RGS17, RGS20, RGS4, PPP1R9B and HINT1. Isoform 9 interacts with GRPR. In terms of processing, phosphorylated. Differentially phosphorylated in basal and agonist-induced conditions. Agonist-mediated phosphorylation modulates receptor internalization. Phosphorylated by GRK2 in a agonist-dependent manner. Phosphorylation at Tyr-166 requires receptor activation, is dependent on non-receptor protein tyrosine kinase Src and results in a decrease in agonist efficacy by reducing G-protein coupling efficiency. Phosphorylated on tyrosine residues; the phosphorylation is involved in agonist-induced G-protein-independent receptor down-regulation. Phosphorylation at Ser-375 is involved in G-protein-dependent but not beta-arrestin-dependent activation of the ERK pathway. Ubiquitinated. A basal ubiquitination seems not to be related to degradation. Ubiquitination is increased upon formation of OPRM1:OPRD1 oligomers leading to proteasomal degradation; the ubiquitination is diminished by RTP4.

Its subcellular location is the cell membrane. It localises to the cell projection. The protein resides in the axon. The protein localises to the perikaryon. It is found in the dendrite. Its subcellular location is the endosome. In terms of biological role, receptor for endogenous opioids such as beta-endorphin and endomorphin. Receptor for natural and synthetic opioids including morphine, heroin, DAMGO, fentanyl, etorphine, buprenorphin and methadone. Also activated by enkephalin peptides, such as Met-enkephalin or Met-enkephalin-Arg-Phe, with higher affinity for Met-enkephalin-Arg-Phe. Agonist binding to the receptor induces coupling to an inactive GDP-bound heterotrimeric G-protein complex and subsequent exchange of GDP for GTP in the G-protein alpha subunit leading to dissociation of the G-protein complex with the free GTP-bound G-protein alpha and the G-protein beta-gamma dimer activating downstream cellular effectors. The agonist- and cell type-specific activity is predominantly coupled to pertussis toxin-sensitive G(i) and G(o) G alpha proteins, GNAI1, GNAI2, GNAI3 and GNAO1 isoforms Alpha-1 and Alpha-2, and to a lesser extent to pertussis toxin-insensitive G alpha proteins GNAZ and GNA15. They mediate an array of downstream cellular responses, including inhibition of adenylate cyclase activity and both N-type and L-type calcium channels, activation of inward rectifying potassium channels, mitogen-activated protein kinase (MAPK), phospholipase C (PLC), phosphoinositide/protein kinase (PKC), phosphoinositide 3-kinase (PI3K) and regulation of NF-kappa-B. Also couples to adenylate cyclase stimulatory G alpha proteins. The selective temporal coupling to G-proteins and subsequent signaling can be regulated by RGSZ proteins, such as RGS9, RGS17 and RGS4. Phosphorylation by members of the GPRK subfamily of Ser/Thr protein kinases and association with beta-arrestins is involved in short-term receptor desensitization. Beta-arrestins associate with the GPRK-phosphorylated receptor and uncouple it from the G-protein thus terminating signal transduction. The phosphorylated receptor is internalized through endocytosis via clathrin-coated pits which involves beta-arrestins. The activation of the ERK pathway occurs either in a G-protein-dependent or a beta-arrestin-dependent manner and is regulated by agonist-specific receptor phosphorylation. Acts as a class A G-protein coupled receptor (GPCR) which dissociates from beta-arrestin at or near the plasma membrane and undergoes rapid recycling. Receptor down-regulation pathways are varying with the agonist and occur dependent or independent of G-protein coupling. Endogenous ligands induce rapid desensitization, endocytosis and recycling. Heterooligomerization with other GPCRs can modulate agonist binding, signaling and trafficking properties. Functionally, isoform 9 is involved in morphine-induced scratching and seems to cross-activate GRPR in response to morphine. The protein is Mu-type opioid receptor (Oprm1) of Mus musculus (Mouse).